Here is a 191-residue protein sequence, read N- to C-terminus: UPF0312 protein PSPA7_0523 (191 aa).

The first 23 residues, 1–23 (MLKKTLAALALGSALFTAGQAMA), serve as a signal peptide directing secretion.

It belongs to the UPF0312 family. Type 1 subfamily.

It is found in the periplasm. In Pseudomonas paraeruginosa (strain DSM 24068 / PA7) (Pseudomonas aeruginosa (strain PA7)), this protein is UPF0312 protein PSPA7_0523.